We begin with the raw amino-acid sequence, 278 residues long: Envelope glycoprotein L (278 aa).

Positions 1–30 (MCRRPDCGFSFSPGPVILLWCCLLLPIVSS) are cleaved as a signal peptide. A gL betaherpesvirus-type domain is found at 43-256 (VPAECPELTR…DKYYAGLPPE (214 aa)). C154 and C159 are joined by a disulfide.

It belongs to the herpesviridae glycoprotein L (gL) family. Betaherpesvirinae gL subfamily. As to quaternary structure, interacts with glycoprotein H (gH); this interaction is necessary for the correct processing and cell surface expression of gH. Forms the envelope pentamer complex (PC) composed of gH, gL, UL128, UL130, and UL131A. The pentamer interacts with host NRP2. Forms the envelope trimer complex composed of gH, gL, and gO. The trimer interacts with host PDGFRA. The trimer also interacts with host EPHA2.

Its subcellular location is the virion membrane. The protein resides in the host cell membrane. It is found in the host Golgi apparatus. It localises to the host trans-Golgi network. In terms of biological role, the heterodimer glycoprotein H-glycoprotein L is required for the fusion of viral and plasma membranes leading to virus entry into the host cell. Acts as a functional inhibitor of gH and maintains gH in an inhibited form. Upon binding to host integrins, gL dissociates from gH leading to activation of the viral fusion glycoproteins gB and gH. In human cytomegalovirus, forms two distincts complexes to mediate viral entry, a trimer and a pentamer at the surface of the virion envelope. The gH-gL-gO trimer is required for infection in fibroblasts by interacting with host PDGFRA, and in glioblastoma cells by interacting with host EPHA2. The gH-gL-UL128-UL130-UL131A pentamer is essential for viral entry in epithelial, endothelial and myeloid cells via interaction with host NRP2. In Human cytomegalovirus (strain 5160) (HHV-5), this protein is Envelope glycoprotein L.